A 441-amino-acid polypeptide reads, in one-letter code: Proline--tRNA ligase (441 aa).

It belongs to the class-II aminoacyl-tRNA synthetase family. ProS type 2 subfamily. Homodimer.

It localises to the cytoplasm. It catalyses the reaction tRNA(Pro) + L-proline + ATP = L-prolyl-tRNA(Pro) + AMP + diphosphate. Functionally, catalyzes the attachment of proline to tRNA(Pro) in a two-step reaction: proline is first activated by ATP to form Pro-AMP and then transferred to the acceptor end of tRNA(Pro). In Bartonella bacilliformis (strain ATCC 35685 / KC583 / Herrer 020/F12,63), this protein is Proline--tRNA ligase.